A 273-amino-acid polypeptide reads, in one-letter code: Large ribosomal subunit protein uL2 (273 aa).

Residues 221 to 273 (RGTAMNPVDHPHGGGEGRNFGKHPVTPWGVQTKGKKTRHNKRTDKFIVRRRGK) are disordered. Residues 253-273 (KGKKTRHNKRTDKFIVRRRGK) show a composition bias toward basic residues.

Belongs to the universal ribosomal protein uL2 family. As to quaternary structure, part of the 50S ribosomal subunit. Forms a bridge to the 30S subunit in the 70S ribosome.

Functionally, one of the primary rRNA binding proteins. Required for association of the 30S and 50S subunits to form the 70S ribosome, for tRNA binding and peptide bond formation. It has been suggested to have peptidyltransferase activity; this is somewhat controversial. Makes several contacts with the 16S rRNA in the 70S ribosome. The chain is Large ribosomal subunit protein uL2 from Glaesserella parasuis serovar 5 (strain SH0165) (Haemophilus parasuis).